Here is a 43-residue protein sequence, read N- to C-terminus: Protein PsbN (43 aa).

A helical transmembrane segment spans residues 7–29 (VAIFLSGLLVSFTGYALYTAFGQ).

This sequence belongs to the PsbN family.

The protein resides in the plastid. It is found in the chloroplast thylakoid membrane. May play a role in photosystem I and II biogenesis. In Draba nemorosa (Woodland whitlowgrass), this protein is Protein PsbN.